A 360-amino-acid polypeptide reads, in one-letter code: Photosystem II protein D1 (360 aa).

3 helical membrane-spanning segments follow: residues 29 to 46, 118 to 133, and 142 to 156; these read YIGW…TATS, HFLT…EWEL, and WISV…AAAA. His-118 contacts chlorophyll a. Tyr-126 is a pheophytin a binding site. 2 residues coordinate [CaMn4O5] cluster: Asp-170 and Glu-189. The chain crosses the membrane as a helical span at residues 197–218; it reads FHQLGVAGVFGGSLFSAMHGSL. Residue His-198 coordinates chlorophyll a. Residues His-215 and 264–265 each bind a quinone; that span reads SF. Position 215 (His-215) interacts with Fe cation. Position 272 (His-272) interacts with Fe cation. The helical transmembrane segment at 274-288 threads the bilayer; the sequence is FLGLWPVVGIWLTAL. [CaMn4O5] cluster is bound by residues His-332, Glu-333, Asp-342, and Ala-344. The propeptide occupies 345-360; sequence SGESLPVALTAPAVNG.

The protein belongs to the reaction center PufL/M/PsbA/D family. PSII is composed of 1 copy each of membrane proteins PsbA, PsbB, PsbC, PsbD, PsbE, PsbF, PsbH, PsbI, PsbJ, PsbK, PsbL, PsbM, PsbT, PsbX, PsbY, PsbZ, Psb30/Ycf12, at least 3 peripheral proteins of the oxygen-evolving complex and a large number of cofactors. It forms dimeric complexes. Requires The D1/D2 heterodimer binds P680, chlorophylls that are the primary electron donor of PSII, and subsequent electron acceptors. It shares a non-heme iron and each subunit binds pheophytin, quinone, additional chlorophylls, carotenoids and lipids. D1 provides most of the ligands for the Mn4-Ca-O5 cluster of the oxygen-evolving complex (OEC). There is also a Cl(-1) ion associated with D1 and D2, which is required for oxygen evolution. The PSII complex binds additional chlorophylls, carotenoids and specific lipids. as cofactor. In terms of processing, tyr-161 forms a radical intermediate that is referred to as redox-active TyrZ, YZ or Y-Z. C-terminally processed by CTPA; processing is essential to allow assembly of the oxygen-evolving complex and thus photosynthetic growth.

It is found in the plastid. It localises to the chloroplast thylakoid membrane. The enzyme catalyses 2 a plastoquinone + 4 hnu + 2 H2O = 2 a plastoquinol + O2. In terms of biological role, photosystem II (PSII) is a light-driven water:plastoquinone oxidoreductase that uses light energy to abstract electrons from H(2)O, generating O(2) and a proton gradient subsequently used for ATP formation. It consists of a core antenna complex that captures photons, and an electron transfer chain that converts photonic excitation into a charge separation. The D1/D2 (PsbA/PsbD) reaction center heterodimer binds P680, the primary electron donor of PSII as well as several subsequent electron acceptors. In Pyropia yezoensis (Susabi-nori), this protein is Photosystem II protein D1.